The primary structure comprises 169 residues: NADH-quinone oxidoreductase subunit B (169 aa).

[4Fe-4S] cluster is bound by residues C42, C43, C107, and C136.

Belongs to the complex I 20 kDa subunit family. As to quaternary structure, NDH-1 is composed of 14 different subunits. Subunits NuoB, C, D, E, F, and G constitute the peripheral sector of the complex. Requires [4Fe-4S] cluster as cofactor.

The protein resides in the cell inner membrane. It carries out the reaction a quinone + NADH + 5 H(+)(in) = a quinol + NAD(+) + 4 H(+)(out). Functionally, NDH-1 shuttles electrons from NADH, via FMN and iron-sulfur (Fe-S) centers, to quinones in the respiratory chain. The immediate electron acceptor for the enzyme in this species is believed to be ubiquinone. Couples the redox reaction to proton translocation (for every two electrons transferred, four hydrogen ions are translocated across the cytoplasmic membrane), and thus conserves the redox energy in a proton gradient. The polypeptide is NADH-quinone oxidoreductase subunit B (Sulfurimonas denitrificans (strain ATCC 33889 / DSM 1251) (Thiomicrospira denitrificans (strain ATCC 33889 / DSM 1251))).